The primary structure comprises 155 residues: Transcription antitermination protein NusB (155 aa).

It belongs to the NusB family.

Involved in transcription antitermination. Required for transcription of ribosomal RNA (rRNA) genes. Binds specifically to the boxA antiterminator sequence of the ribosomal RNA (rrn) operons. This is Transcription antitermination protein NusB from Vibrio vulnificus (strain CMCP6).